An 878-amino-acid polypeptide reads, in one-letter code: Outer membrane usher protein FimD (878 aa).

Positions 1 to 45 are cleaved as a signal peptide; the sequence is MSYLNLRLYQRNTQCLHIRKHRLAGFFVRLVVACAFAAQAPLSSA. Residues Cys-855 and Cys-877 are joined by a disulfide bond.

Belongs to the fimbrial export usher family.

The protein resides in the cell outer membrane. In terms of biological role, involved in the export and assembly of FimA fimbrial subunits across the outer membrane. This is Outer membrane usher protein FimD (fimD) from Escherichia coli (strain K12).